The sequence spans 356 residues: UDP-N-acetylglucosamine--N-acetylmuramyl-(pentapeptide) pyrophosphoryl-undecaprenol N-acetylglucosamine transferase (356 aa).

UDP-N-acetyl-alpha-D-glucosamine is bound by residues 11-13, asparagine 117, arginine 160, serine 188, and glutamine 290; that span reads TGG.

The protein belongs to the glycosyltransferase 28 family. MurG subfamily.

Its subcellular location is the cell inner membrane. The enzyme catalyses di-trans,octa-cis-undecaprenyl diphospho-N-acetyl-alpha-D-muramoyl-L-alanyl-D-glutamyl-meso-2,6-diaminopimeloyl-D-alanyl-D-alanine + UDP-N-acetyl-alpha-D-glucosamine = di-trans,octa-cis-undecaprenyl diphospho-[N-acetyl-alpha-D-glucosaminyl-(1-&gt;4)]-N-acetyl-alpha-D-muramoyl-L-alanyl-D-glutamyl-meso-2,6-diaminopimeloyl-D-alanyl-D-alanine + UDP + H(+). It participates in cell wall biogenesis; peptidoglycan biosynthesis. Cell wall formation. Catalyzes the transfer of a GlcNAc subunit on undecaprenyl-pyrophosphoryl-MurNAc-pentapeptide (lipid intermediate I) to form undecaprenyl-pyrophosphoryl-MurNAc-(pentapeptide)GlcNAc (lipid intermediate II). This chain is UDP-N-acetylglucosamine--N-acetylmuramyl-(pentapeptide) pyrophosphoryl-undecaprenol N-acetylglucosamine transferase, found in Rickettsia bellii (strain RML369-C).